The sequence spans 139 residues: Small ribosomal subunit protein uS9 (139 aa).

This sequence belongs to the universal ribosomal protein uS9 family.

This is Small ribosomal subunit protein uS9 from Coxiella burnetii (strain CbuK_Q154) (Coxiella burnetii (strain Q154)).